The following is an 854-amino-acid chain: Iron and copper transporter IacT (854 aa).

A TonB box motif is present at residues 187–194 (IELIVTAQ). In terms of domain architecture, TBDR plug spans 199–315 (DAQDVPLSLT…PAGVVNVISR (117 aa)). Residues 320–854 (QPEMRISALY…TYGVRVSASF (535 aa)) form the TBDR beta-barrel domain. The short motif at 839–854 (GFGDPVTYGVRVSASF) is the TonB C-terminal box element.

Belongs to the TonB-dependent receptor family.

It localises to the cell outer membrane. In terms of biological role, involved in the TonB-dependent uptake of copper and iron under conditions in which the concentration of copper exceeds that of the iron. The sequence is that of Iron and copper transporter IacT from Nostoc sp. (strain PCC 7120 / SAG 25.82 / UTEX 2576).